A 99-amino-acid polypeptide reads, in one-letter code: Nucleoid-associated protein SAG1747 (99 aa).

Residues 1-10 show a composition bias toward low complexity; the sequence is MMNMQNMMRQ. Residues 1-20 form a disordered region; sequence MMNMQNMMRQAQKLQKQMEQ.

The protein belongs to the YbaB/EbfC family. As to quaternary structure, homodimer.

The protein resides in the cytoplasm. Its subcellular location is the nucleoid. Functionally, binds to DNA and alters its conformation. May be involved in regulation of gene expression, nucleoid organization and DNA protection. This Streptococcus agalactiae serotype V (strain ATCC BAA-611 / 2603 V/R) protein is Nucleoid-associated protein SAG1747.